The primary structure comprises 371 residues: Flagellar P-ring protein (371 aa).

The first 25 residues, 1-25, serve as a signal peptide directing secretion; sequence MTMRVCKWLLTFALLFAATLTPAHS.

The protein belongs to the FlgI family. In terms of assembly, the basal body constitutes a major portion of the flagellar organelle and consists of four rings (L,P,S, and M) mounted on a central rod.

Its subcellular location is the periplasm. It is found in the bacterial flagellum basal body. Functionally, assembles around the rod to form the L-ring and probably protects the motor/basal body from shearing forces during rotation. The protein is Flagellar P-ring protein of Sinorhizobium fredii (strain NBRC 101917 / NGR234).